A 775-amino-acid chain; its full sequence is Meiotic driver SPOK2 (775 aa).

Positions 4-69 form a coiled coil; sequence KDRIAQLLRE…RCERERLQLE (66 aa). Disordered regions lie at residues 18–51, 211–249, 442–525, and 734–761; these read KARE…REEE, QKDD…YICS, LSSA…AMAD, and PPPK…AQLF. The segment covering 444–457 has biased composition (polar residues); that stretch reads SAPSSQNTDISEYT.

Its subcellular location is the cytoplasm. The protein resides in the nucleus. Functionally, promotes unequal transmission of alleles from the parental zygote to progeny spores by acting as poison/antidote system, leading to poisoning of progeny that do not inherit the allele. May possess DNA nuclease activity that leads to spore killing, and a kinase activity that confers resistance to the nuclease activity. This chain is Meiotic driver SPOK2, found in Podospora anserina (strain S / ATCC MYA-4624 / DSM 980 / FGSC 10383) (Pleurage anserina).